Consider the following 493-residue polypeptide: Glutamate--tRNA ligase (493 aa).

The 'HIGH' region motif lies at 10–20; that stretch reads PSPTGDPHVGT. A 'KMSKS' region motif is present at residues 251–255; the sequence is KLSKR. Residue lysine 254 coordinates ATP.

The protein belongs to the class-I aminoacyl-tRNA synthetase family. Glutamate--tRNA ligase type 1 subfamily. Monomer.

The protein localises to the cytoplasm. The enzyme catalyses tRNA(Glu) + L-glutamate + ATP = L-glutamyl-tRNA(Glu) + AMP + diphosphate. Functionally, catalyzes the attachment of glutamate to tRNA(Glu) in a two-step reaction: glutamate is first activated by ATP to form Glu-AMP and then transferred to the acceptor end of tRNA(Glu). This Pseudomonas savastanoi pv. phaseolicola (strain 1448A / Race 6) (Pseudomonas syringae pv. phaseolicola (strain 1448A / Race 6)) protein is Glutamate--tRNA ligase.